Consider the following 352-residue polypeptide: Membrane progestin receptor alpha (352 aa).

Topologically, residues 1-75 (MATVVMEQIG…FLTLFQRHNE (75 aa)) are cytoplasmic. Residues 76 to 96 (TLNVWTHLLAAFIILVKWQEI) traverse the membrane as a helical segment. At 97 to 110 (SETVDFLRDPHAQP) the chain is on the extracellular side. The chain crosses the membrane as a helical span at residues 111–131 (LFIVLLAAFTYLSFSALAHLL). At 132–139 (SAKSELSY) the chain is on the cytoplasmic side. Residues 140–160 (YTFYFLDYVGVAVYQYGSALA) traverse the membrane as a helical segment. The Extracellular portion of the chain corresponds to 161–175 (HYYYAIEKEWHTKVQ). Residues 176–196 (GLFLPAAAFLAWLTCFGCCYG) form a helical membrane-spanning segment. Residues 197-242 (KYASPELPKVANKLFQVVPSALAYCLDISPVVHRIYSCYQEGCSDP) are Cytoplasmic-facing. Residues 243–263 (VVAYHFYHVVFFLIGAYFFCC) traverse the membrane as a helical segment. At 264 to 275 (PHPESLFPGKCD) the chain is on the extracellular side. Residues 276 to 296 (FIGQGHQLFHVFVVVCTLTQV) form a helical membrane-spanning segment. Residues 297–316 (EALRTDFTERRPFYERLHGD) are Cytoplasmic-facing. A helical transmembrane segment spans residues 317–337 (LAHDAVALFIFTACCSALTAF). Topologically, residues 338 to 352 (YVRQRVRASLHEKGE) are extracellular.

Belongs to the ADIPOR family. In terms of tissue distribution, strongly expressed in ovary and brain; lower expression in testis and pituitary. Not detected in heart, kidney, spleen, intestine, gill and muscle.

The protein localises to the cell membrane. Steroid membrane receptor. Binds progesterone, progestin and 17-hydroxyprogesterone in vitro. Capable of mediating progestin-induced oocyte maturation. This Cynoscion nebulosus (Spotted seatrout) protein is Membrane progestin receptor alpha (mpra).